Consider the following 882-residue polypeptide: Lon protease homolog, mitochondrial (882 aa).

The transit peptide at 1–34 directs the protein to the mitochondrion; that stretch reads MIHVLKSRSTLLTASSIVRTSVGSSSRYSQTRTY. Residues 68–281 enclose the Lon N-terminal domain; it reads TLGLPLVSRP…KALVLLNRER (214 aa). 435–442 lines the ATP pocket; that stretch reads GPPGTGKT. The Lon proteolytic domain maps to 687-878; it reads PLPHGIVMGL…DKVYEVAFSS (192 aa). Catalysis depends on residues S784 and K827.

This sequence belongs to the peptidase S16 family. Homohexamer or homoheptamer. Organized in a ring with a central cavity.

The protein localises to the mitochondrion matrix. It catalyses the reaction Hydrolysis of proteins in presence of ATP.. In terms of biological role, ATP-dependent serine protease that mediates the selective degradation of misfolded, unassembled or oxidatively damaged polypeptides as well as certain short-lived regulatory proteins in the mitochondrial matrix. May also have a chaperone function in the assembly of inner membrane protein complexes. Participates in the regulation of mitochondrial gene expression and in the maintenance of the integrity of the mitochondrial genome. Binds to mitochondrial DNA in a site-specific manner. The chain is Lon protease homolog, mitochondrial from Phaeodactylum tricornutum (strain CCAP 1055/1).